The sequence spans 22 residues: uncharacterized protein (22 aa).

Residues 1 to 22 (MHNSIAYDKDGNSTGQKYYAYG) are disordered.

This is an uncharacterized protein from Lactobacillus helveticus (Lactobacillus suntoryeus).